Consider the following 592-residue polypeptide: Condensin-2 complex subunit H2 (592 aa).

2 disordered regions span residues 89–116 (NKKRDKQGSSSDGNQEQAPSGSEGDGCE) and 261–285 (EAPSEGRMLRPRPAVQPVSEEPKQL). Over residues 96–108 (GSSSDGNQEQAPS) the composition is skewed to polar residues.

The protein belongs to the CND2 H2 (condensin-2 subunit 2) family. Component of the condensin-2 complex, which contains the smc2 and smc4 heterodimer, and three non SMC subunits, ncapg2, ncaph2 and ncapd3 that probably regulate the complex.

The protein localises to the nucleus. Regulatory subunit of the condensin-2 complex, a complex that seems to provide chromosomes with an additional level of organization and rigidity and in establishing mitotic chromosome architecture. This chain is Condensin-2 complex subunit H2 (ncaph2), found in Danio rerio (Zebrafish).